The primary structure comprises 134 residues: Transmembrane protein 100 (134 aa).

Transmembrane regions (helical) follow at residues 56–76 and 84–104; these read CIIPFAVVVFIAGIVVTAVAY and IISIFGLVVLSSGLFLLASSA. S121 bears the Phosphoserine mark.

In terms of assembly, interacts (via C-terminus) with TRPA1 and TRPV1. Interacts with TASOR. Expressed in neurons of the myenteric and submucosal plexuses in the gastric body, jejunum and proximal colon. Expressed in arterial endothelial cells and neurons of the central nervous system and peripheral nervous system. Expressed in umbilical artery endothelial cells (at protein level).

The protein localises to the cell membrane. It is found in the membrane. The protein resides in the perikaryon. Its subcellular location is the cytoplasm. It localises to the perinuclear region. The protein localises to the endoplasmic reticulum. Plays a role during embryonic arterial endothelium differentiation and vascular morphogenesis through the ACVRL1 receptor-dependent signaling pathway upon stimulation by bone morphogenetic proteins, such as GDF2/BMP9 and BMP10. Involved in the regulation of nociception, acting as a modulator of the interaction between TRPA1 and TRPV1, two molecular sensors and mediators of pain signals in dorsal root ganglia (DRG) neurons. Mechanistically, it weakens their interaction, thereby releasing the inhibition of TRPA1 by TRPV1 and increasing the single-channel open probability of the TRPA1-TRPV1 complex. In Homo sapiens (Human), this protein is Transmembrane protein 100 (TMEM100).